The sequence spans 498 residues: E3 ubiquitin-protein ligase TRIM22 (498 aa).

The segment at Cys-15–Gln-60 adopts an RING-type zinc-finger fold. A B box-type zinc finger spans residues Gln-92–Ile-133. The Zn(2+) site is built by Cys-97, His-100, Cys-119, and His-125. Residues Arg-132–Met-248 adopt a coiled-coil conformation. The short motif at Lys-257–Lys-275 is the Nuclear localization signal element. Positions Leu-283–Ser-498 constitute a B30.2/SPRY domain.

It belongs to the TRIM/RBCC family. Homotrimer. In terms of assembly, (Microbial infection) Interacts with HIV-1 Gag polyprotein; this interaction seems to reduce gag production or virus budding. As to quaternary structure, (Microbial infection) Interacts with EMCV protease 3C; this interaction leads to viral protease ubiquitination. Auto-ubiquitinated. Strongly expressed in peripheral blood leukocytes, spleen, thymus, and ovary. Expressed at basal levels in other tissues.

The protein resides in the cytoplasm. It localises to the nucleus. It is found in the nucleus speckle. The protein localises to the cajal body. The catalysed reaction is S-ubiquitinyl-[E2 ubiquitin-conjugating enzyme]-L-cysteine + [acceptor protein]-L-lysine = [E2 ubiquitin-conjugating enzyme]-L-cysteine + N(6)-ubiquitinyl-[acceptor protein]-L-lysine.. The protein operates within protein modification; protein ubiquitination. In terms of biological role, interferon-induced E3 ubiquitin ligase that plays important roles in innate and adaptive immunity. Restricts the replication of many viruses including HIV-1, encephalomyocarditis virus (EMCV), hepatitis B virus (HBV), hepatitis C virus (HCV) or Zika virus (ZIKV). Mechanistically, negatively regulates HCV replication by promoting ubiquitination and subsequent degradation of viral NS5A. Also acts by promoting the degradation of Zika virus NS1 and NS3 proteins through proteasomal degradation. Acts as a suppressor of basal HIV-1 LTR-driven transcription by preventing Sp1 binding to the HIV-1 promoter. Also plays a role in antiviral immunity by co-regulating together with NT5C2 the RIGI/NF-kappa-B pathway by promoting 'Lys-63'-linked ubiquitination of RIGI, while NT5C2 is responsible for 'Lys-48'-linked ubiquitination of RIGI. Participates in adaptive immunity by suppressing the amount of MHC class II protein in a negative feedback manner in order to limit the extent of MHC class II induction. The protein is E3 ubiquitin-protein ligase TRIM22 (TRIM22) of Homo sapiens (Human).